Reading from the N-terminus, the 254-residue chain is 3-oxo-5-alpha-steroid 4-dehydrogenase 2 (254 aa).

Transmembrane regions (helical) follow at residues 8–28 (SPVL…LYVA), 72–92 (PLSL…LHYF), 146–166 (FSLG…SDYI), and 206–226 (LATW…FLGL).

This sequence belongs to the steroid 5-alpha reductase family. Expressed in high levels in the prostate and many other androgen-sensitive tissues.

The protein resides in the microsome membrane. It is found in the endoplasmic reticulum membrane. It catalyses the reaction a 3-oxo-5alpha-steroid + NADP(+) = a 3-oxo-Delta(4)-steroid + NADPH + H(+). The enzyme catalyses 17beta-hydroxy-5alpha-androstan-3-one + NADP(+) = testosterone + NADPH + H(+). The catalysed reaction is 5alpha-pregnane-3,20-dione + NADP(+) = progesterone + NADPH + H(+). Its function is as follows. Converts testosterone (T) into 5-alpha-dihydrotestosterone (DHT) and progesterone or corticosterone into their corresponding 5-alpha-3-oxosteroids. It plays a central role in sexual differentiation and androgen physiology. The protein is 3-oxo-5-alpha-steroid 4-dehydrogenase 2 (SRD5A2) of Homo sapiens (Human).